Consider the following 38-residue polypeptide: Phospholipase A2 1 (38 aa).

Residues tyrosine 28, glycine 30, and glycine 32 each coordinate Ca(2+).

It belongs to the phospholipase A2 family. Group I subfamily. It depends on Ca(2+) as a cofactor. In terms of tissue distribution, expressed by the venom gland.

Its subcellular location is the secreted. It catalyses the reaction a 1,2-diacyl-sn-glycero-3-phosphocholine + H2O = a 1-acyl-sn-glycero-3-phosphocholine + a fatty acid + H(+). Its function is as follows. Snake venom phospholipase A2 (PLA2) that inhibits neuromuscular transmission by blocking acetylcholine release from the nerve termini. PLA2 catalyzes the calcium-dependent hydrolysis of the 2-acyl groups in 3-sn-phosphoglycerides. The protein is Phospholipase A2 1 of Calliophis bivirgatus (Blue Malaysian coral snake).